The following is a 254-amino-acid chain: O-antigen biosynthesis glycosyltransferase WbnJ (254 aa).

It belongs to the glycosyltransferase 2 family.

The enzyme catalyses an N-acetyl-alpha-D-galactosaminyl derivative + UDP-alpha-D-galactose = a beta-D-galactosyl-(1-&gt;3)-N-acetyl-alpha-D-galactosaminyl derivative + UDP + H(+). It carries out the reaction alpha-D-GalNAc-(1-&gt;3)-alpha-D-GalNAc-di-trans,octa-cis-undecaprenyl diphosphate + UDP-alpha-D-galactose = beta-D-Gal-(1-&gt;3)-alpha-D-GalNAc-(1-&gt;3)-alpha-D-GalNAc-di-trans,octa-cis-undecaprenyl diphosphate + UDP + H(+). It functions in the pathway bacterial outer membrane biogenesis; LPS O-antigen biosynthesis. Involved in the assembly of the O-repeating unit during O-antigen biosynthesis. This Escherichia coli protein is O-antigen biosynthesis glycosyltransferase WbnJ.